The following is a 276-amino-acid chain: Digeranylgeranylglyceryl phosphate synthase (276 aa).

7 consecutive transmembrane segments (helical) span residues 14–34 (NCIL…GHFP), 40–60 (LLIF…NDYF), 92–112 (FAVG…LGVI), 146–166 (GAVA…AFLV), 202–222 (VGVL…KASV), 224–244 (VGYY…YLIL), and 256–276 (QKLL…AAIV).

The protein belongs to the UbiA prenyltransferase family. DGGGP synthase subfamily. Requires Mg(2+) as cofactor.

The protein resides in the cell membrane. The enzyme catalyses sn-3-O-(geranylgeranyl)glycerol 1-phosphate + (2E,6E,10E)-geranylgeranyl diphosphate = 2,3-bis-O-(geranylgeranyl)-sn-glycerol 1-phosphate + diphosphate. It functions in the pathway membrane lipid metabolism; glycerophospholipid metabolism. Its function is as follows. Prenyltransferase that catalyzes the transfer of the geranylgeranyl moiety of geranylgeranyl diphosphate (GGPP) to the C2 hydroxyl of (S)-3-O-geranylgeranylglyceryl phosphate (GGGP). This reaction is the second ether-bond-formation step in the biosynthesis of archaeal membrane lipids. In Thermococcus onnurineus (strain NA1), this protein is Digeranylgeranylglyceryl phosphate synthase.